The following is a 546-amino-acid chain: Src substrate cortactin (546 aa).

A disordered region spans residues methionine 1–phenylalanine 28. Positions glycine 17–phenylalanine 28 are enriched in acidic residues. Cortactin repeat units lie at residues alanine 80–aspartate 116, serine 117–aspartate 153, tyrosine 154–aspartate 190, tyrosine 191–aspartate 227, tyrosine 228–aspartate 264, and tyrosine 265–aspartate 301. Residues lysine 87 and lysine 107 each carry the N6-acetyllysine modification. Serine 113 carries the post-translational modification Phosphoserine. Position 119 is an omega-N-methylarginine (arginine 119). Position 124 is an N6-acetyllysine (lysine 124). Lysine 144 carries the N6-acetyllysine; alternate modification. A Glycyl lysine isopeptide (Lys-Gly) (interchain with G-Cter in SUMO1); alternate cross-link involves residue lysine 144. Lysine 144 is covalently cross-linked (Glycyl lysine isopeptide (Lys-Gly) (interchain with G-Cter in SUMO2); alternate). A Phosphoserine modification is found at serine 150. Lysine 152, lysine 161, and lysine 171 each carry N6-acetyllysine. At lysine 181 the chain carries N6-acetyllysine; alternate. Lysine 181 is covalently cross-linked (Glycyl lysine isopeptide (Lys-Gly) (interchain with G-Cter in SUMO1); alternate). Residue lysine 181 forms a Glycyl lysine isopeptide (Lys-Gly) (interchain with G-Cter in SUMO2); alternate linkage. N6-acetyllysine is present on residues lysine 193 and lysine 198. Residue lysine 218 forms a Glycyl lysine isopeptide (Lys-Gly) (interchain with G-Cter in SUMO1) linkage. N6-acetyllysine is present on lysine 235. Serine 261 is modified (phosphoserine). At lysine 272 the chain carries N6-acetyllysine. Position 295 is an N6-acetyllysine; alternate (lysine 295). Lysine 295 participates in a covalent cross-link: Glycyl lysine isopeptide (Lys-Gly) (interchain with G-Cter in SUMO2); alternate. The Cortactin 7; truncated repeat unit spans residues tyrosine 302–phenylalanine 324. N6-acetyllysine occurs at positions 304, 309, 314, and 346. The stretch at serine 348–threonine 401 forms a coiled coil. The segment at glutamate 355 to alanine 424 is disordered. Basic and acidic residues predominate over residues leucine 357–arginine 396. At threonine 401 the chain carries Phosphothreonine. Phosphoserine occurs at positions 405, 407, 417, and 418. 2 positions are modified to phosphotyrosine: tyrosine 421 and tyrosine 442. Phosphoserine is present on serine 443. Position 466 is a phosphotyrosine; by FAK1 (tyrosine 466). Phosphotyrosine; by SRC occurs at positions 482 and 485. The SH3 domain occupies aspartate 488 to glutamine 546.

Part of a complex composed of NEDD9, AURKA and CTTN; within the complex NEDD9 acts as a scaffold protein and is required for complex formation. Interacts (via N-terminus) with NEDD9. Identified in a complex containing FGFR4, NCAM1, CDH2, PLCG1, FRS2, SRC, SHC1, GAP43 and CTTN. Forms a complex with ABL1 and MYLK. Interacts with SHANK2 and SHANK3 (via its SH3 domain). Interacts with PLXDC2 and SRCIN1. Interacts with SAMSN1 (via SH3 domain). Interacts (via SH3 domain) with ASAP1 (via Pro-rich region). Interacts (via SH3 domain) with DNM2. Interacts with ACTN1. Interacts with FER. Interacts with KCNA2 (via non-phosphorylated C-terminus). Interacts with FGD1. Interacts with ABL2. Interacts with CTTNBP2NL; this interaction may target CTTN to stress fibers. Interacts with CTTNBP2; this interaction may target CTTN at the cell cortex or dendritic spines. Interacts with KCNH1. Interacts (via SH3 domain) with DIP2A (via N-terminus); the interaction enhances CTTN acetylation and is required for proper synaptic transmission. Interacts with XIRP1 (via N-terminus); the interaction promotes CTTN localization to intercalated disks in cardiomyocytes. Post-translationally, acetylated. Phosphorylated by FER. Phosphorylated in response to FGR activation. Phosphorylation by SRC promotes MYLK binding. Phosphorylated on tyrosine residues in response to CHRM1 activation. Phosphorylated by PTK2/FAK1 in response to cell adhesion. Tyrosine phosphorylation in transformed cells may contribute to cellular growth regulation and transformation. Phosphorylated by PKN2 at both serine and threonine residues in a GTP-bound Rac1-dependent manner in hyaluronan-induced astrocytes and hence down-regulated CTTN ability to associate with filamentous actin. As to expression, expressed at intercalated disks in the heart (at protein level). Expressed in most tissues, except in B-lymphocytes or plasma cells.

The protein localises to the cytoplasm. The protein resides in the cytoskeleton. It is found in the cell projection. It localises to the lamellipodium. Its subcellular location is the ruffle. The protein localises to the dendrite. The protein resides in the cell membrane. It is found in the podosome. It localises to the cell junction. Its subcellular location is the focal adhesion. The protein localises to the membrane. The protein resides in the clathrin-coated pit. It is found in the dendritic spine. It localises to the cell cortex. Its subcellular location is the endoplasmic reticulum. In terms of biological role, contributes to the organization of the actin cytoskeleton and cell shape. Plays a role in the formation of lamellipodia and in cell migration. Plays a role in the regulation of neuron morphology, axon growth and formation of neuronal growth cones. Through its interaction with CTTNBP2, involved in the regulation of neuronal spine density. Plays a role in focal adhesion assembly and turnover. In complex with ABL1 and MYLK regulates cortical actin-based cytoskeletal rearrangement critical to sphingosine 1-phosphate (S1P)-mediated endothelial cell (EC) barrier enhancement. Plays a role in intracellular protein transport and endocytosis, and in modulating the levels of potassium channels present at the cell membrane. Plays a role in receptor-mediated endocytosis via clathrin-coated pits. Required for stabilization of KCNH1 channels at the cell membrane. The polypeptide is Src substrate cortactin (Cttn) (Mus musculus (Mouse)).